Reading from the N-terminus, the 214-residue chain is Large ribosomal subunit protein uL3 (214 aa).

The segment at 134–153 (ATHGNSLSHRAPGSIGQNQT) is disordered. N5-methylglutamine is present on Gln152.

The protein belongs to the universal ribosomal protein uL3 family. As to quaternary structure, part of the 50S ribosomal subunit. Forms a cluster with proteins L14 and L19. Post-translationally, methylated by PrmB.

Its function is as follows. One of the primary rRNA binding proteins, it binds directly near the 3'-end of the 23S rRNA, where it nucleates assembly of the 50S subunit. The polypeptide is Large ribosomal subunit protein uL3 (Buchnera aphidicola subsp. Baizongia pistaciae (strain Bp)).